We begin with the raw amino-acid sequence, 367 residues long: Histidinol-phosphate aminotransferase (367 aa).

Residue K227 is modified to N6-(pyridoxal phosphate)lysine.

It belongs to the class-II pyridoxal-phosphate-dependent aminotransferase family. Histidinol-phosphate aminotransferase subfamily. Homodimer. Pyridoxal 5'-phosphate is required as a cofactor.

The enzyme catalyses L-histidinol phosphate + 2-oxoglutarate = 3-(imidazol-4-yl)-2-oxopropyl phosphate + L-glutamate. It participates in amino-acid biosynthesis; L-histidine biosynthesis; L-histidine from 5-phospho-alpha-D-ribose 1-diphosphate: step 7/9. The protein is Histidinol-phosphate aminotransferase of Leptospira borgpetersenii serovar Hardjo-bovis (strain JB197).